We begin with the raw amino-acid sequence, 424 residues long: UPF0597 protein Ssed_2537 (424 aa).

The protein belongs to the UPF0597 family.

The protein is UPF0597 protein Ssed_2537 of Shewanella sediminis (strain HAW-EB3).